Here is a 101-residue protein sequence, read N- to C-terminus: Small ribosomal subunit protein uS14 (101 aa).

This sequence belongs to the universal ribosomal protein uS14 family. Part of the 30S ribosomal subunit. Contacts proteins S3 and S10.

In terms of biological role, binds 16S rRNA, required for the assembly of 30S particles and may also be responsible for determining the conformation of the 16S rRNA at the A site. This chain is Small ribosomal subunit protein uS14, found in Hyphomonas neptunium (strain ATCC 15444).